Reading from the N-terminus, the 323-residue chain is RNA polymerase II holoenzyme cyclin-like subunit (323 aa).

Positions 45-176 (DSKQNGIEQS…LLEELESYLI (132 aa)) constitute a Cyclin N-terminal domain.

The protein belongs to the cyclin family. Cyclin C subfamily. As to quaternary structure, component of the SRB8-11 complex which consists of SRB8, SSN2/SRB9, SSN3/SRB10 and SSN8/SRB11. The SRB8-11 complex associates with the Mediator complex. The SSN3/SRB10 and SSN8/SRB11 kinase-cyclin pair also associate with the RNA polymerase II holoenzyme. Interacts with ASK10.

It is found in the nucleus. Functionally, component of the SRB8-11 complex. The SRB8-11 complex is a regulatory module of the Mediator complex which is itself involved in regulation of basal and activated RNA polymerase II-dependent transcription. The SRB8-11 complex may be involved in the transcriptional repression of a subset of genes regulated by Mediator. It may inhibit the association of the Mediator complex with RNA polymerase II to form the holoenzyme complex. The SRB8-11 complex phosphorylates the C-terminal domain (CTD) of the largest subunit of RNA polymerase II RPB1 at serines 2 and 5. The SSN3/SRB10 and SSN8/SRB11 kinase-cyclin pair may also positively and negatively regulate numerous transcriptional activators in response to changes in nutritional and physiological conditions. This is RNA polymerase II holoenzyme cyclin-like subunit (SSN8) from Saccharomyces cerevisiae (strain ATCC 204508 / S288c) (Baker's yeast).